Here is a 314-residue protein sequence, read N- to C-terminus: Olfactory receptor 9I1 (314 aa).

Over 1-25 (MAKNNLTRVTEFILMGFMDHPKLEI) the chain is Extracellular. A glycan (N-linked (GlcNAc...) asparagine) is linked at asparagine 5. The helical transmembrane segment at 26–46 (PLFLVFLSFYLVTLLGNVGMI) threads the bilayer. Residues 47-54 (MLIQVDVK) lie on the Cytoplasmic side of the membrane. A helical membrane pass occupies residues 55-75 (LYTPMYFFLSHLSLLDACYTS). Topologically, residues 76 to 99 (VITPQILATLATGKTVISYGHCAA) are extracellular. An intrachain disulfide couples cysteine 97 to cysteine 189. Residues 100–120 (QFFLFTICAGTECFLLAVMAY) form a helical membrane-spanning segment. The Cytoplasmic segment spans residues 121–139 (DRYAAIRNPLLYTVAMNPR). Residues 140 to 160 (LCWSLVVGAYVCGVSGAILRT) traverse the membrane as a helical segment. The Extracellular segment spans residues 161–197 (TCTFTLSFCKDNQINFFFCDLPPLLKLACSDTANIEI). Residues 198 to 217 (VIIFFGNFVILANASVILIS) form a helical membrane-spanning segment. Topologically, residues 218–237 (YLLIIKTILKVKSSGGRAKT) are cytoplasmic. The helical transmembrane segment at 238–258 (FSTCASHITAVALFFGALIFM) threads the bilayer. The Extracellular portion of the chain corresponds to 259–271 (YLQSGSGKSLEED). The helical transmembrane segment at 272-292 (KVVSVFYTVVIPMLNPLIYSL) threads the bilayer. Residues 293–314 (RNKDVKDAFRKVARRLQVSLSM) lie on the Cytoplasmic side of the membrane.

The protein belongs to the G-protein coupled receptor 1 family.

The protein resides in the cell membrane. In terms of biological role, odorant receptor. The protein is Olfactory receptor 9I1 (OR9I1) of Homo sapiens (Human).